Reading from the N-terminus, the 2357-residue chain is Myosin-I heavy chain (2357 aa).

The region spanning 13 to 688 (QPVEDMITLP…QYLKLEELRK (676 aa)) is the Myosin motor domain. Residue 106 to 113 (GESGAGKT) participates in ATP binding. Positions 579 to 586 (YVRCIKPN) are actin-binding. The IQ domain occupies 691 to 720 (LLKKVTLIQSVWRMYRCKKRYQQIRASAKI). Residues 787–891 (KRDRNARMLE…QDKNINELDD (105 aa)) are a coiled coil. The segment at 787 to 1076 (KRDRNARMLE…PILGAPPPPP (290 aa)) is binding to talin A. Disordered regions lie at residues 797 to 852 (IQRE…EEEL) and 974 to 1112 (ASSF…NPQP). Low complexity-rich tracts occupy residues 1003–1025 (NNNY…SDFS) and 1078–1106 (TSDS…QSTN). One can recognise a MyTH4 1 domain in the interval 1155 to 1313 (YQKSHIKSSL…PSVTELESIK (159 aa)). Residues 1318-1620 (IFVRITATDG…EYSLYLRNNA (303 aa)) enclose the FERM 1 domain. The 61-residue stretch at 1618-1678 (NNAKYARALK…PVDHVEILLS (61 aa)) folds into the SH3 domain. The interval 1686-1849 (VHPVATLSPP…PSKRLTVSPA (164 aa)) is disordered. The segment covering 1706–1733 (TPPPPPSISDSMSPPPQVGMLPPPPPPS) has biased composition (pro residues). Low complexity-rich tracts occupy residues 1734–1746 (VMGS…IPSL) and 1755–1770 (SSNS…SPMM). Polar residues predominate over residues 1817 to 1828 (FRSSLRVSMLNT). In terms of domain architecture, MyTH4 2 spans 1894 to 2051 (FNKDPIKESL…PSATEIQSFR (158 aa)). Residues 2060 to 2357 (STCKIRFIDQ…ASVYQFYSSQ (298 aa)) enclose the FERM 2 domain.

Belongs to the TRAFAC class myosin-kinesin ATPase superfamily. Myosin family. Monomer. Interacts with talA.

It localises to the cytoplasm. Functionally, myosins are actin-based motor molecules with ATPase activity. Involved in the early steps of phagocytosis and adhesion. This is Myosin-I heavy chain (myoI) from Dictyostelium discoideum (Social amoeba).